Reading from the N-terminus, the 302-residue chain is MRHLISMRDIGREEILNILDESERMEAILNEKGHCDFLNGRILATLFYEPSTRTRLSFETAMKRLGGNVIGFTDISNTSVTKGESLADTIKVISGYSDLIAIRHPSEGAARLSSENSKVPVINAGDGSNQHPTQTLLDLYTIKREVGHIENLKIAFIGDLKYGRTVHSLCQALSLFKGVEIKLISPDELKMPREVIEDIAGKIKLSEMADVDIDDVDVVYMTRIQKERFVDVNEYYKVKGIYRLSKEHIGEKNVVIMHPLPRVDEIDSEVDNIPQARYFKQSFYGVPVRMAILKLLFEDSVK.

Carbamoyl phosphate is bound by residues R53 and T54. An L-aspartate-binding site is contributed by K82. R103, H131, and Q134 together coordinate carbamoyl phosphate. L-aspartate contacts are provided by R164 and R223. Carbamoyl phosphate contacts are provided by L260 and P261.

It belongs to the aspartate/ornithine carbamoyltransferase superfamily. ATCase family. In terms of assembly, heterooligomer of catalytic and regulatory chains.

It carries out the reaction carbamoyl phosphate + L-aspartate = N-carbamoyl-L-aspartate + phosphate + H(+). Its pathway is pyrimidine metabolism; UMP biosynthesis via de novo pathway; (S)-dihydroorotate from bicarbonate: step 2/3. In terms of biological role, catalyzes the condensation of carbamoyl phosphate and aspartate to form carbamoyl aspartate and inorganic phosphate, the committed step in the de novo pyrimidine nucleotide biosynthesis pathway. This Methanococcus maripaludis (strain DSM 14266 / JCM 13030 / NBRC 101832 / S2 / LL) protein is Aspartate carbamoyltransferase catalytic subunit.